The sequence spans 477 residues: Shikimate biosynthesis protein AroDE (477 aa).

The segment at 1 to 209 (MLCATVSGPS…LEELLSYNYS (209 aa)) is 3-dehydroquinate dehydratase. 3-dehydroquinate is bound by residues S21, 29-31 (ELR), and 56-58 (TFR). H111 acts as the Proton donor/acceptor; for 3-dehydroquinate dehydratase activity in catalysis. K134 serves as the catalytic Schiff-base intermediate with substrate; for 3-dehydroquinate dehydratase activity. Positions 172 and 197 each coordinate 3-dehydroquinate. Residues 210–477 (KLSEKSHIYG…NYVKNFMAKV (268 aa)) are shikimate 5-dehydrogenase. Residue 228 to 230 (SIS) coordinates shikimate. K279 (proton acceptor; for shikimate dehydrogenase activity) is an active-site residue. 2 residues coordinate shikimate: N300 and D315. NADP(+) is bound by residues 339–343 (GAGGA), 362–364 (NRT), and G438. Q445 lines the shikimate pocket.

In the N-terminal section; belongs to the type-I 3-dehydroquinase family. The protein in the C-terminal section; belongs to the shikimate dehydrogenase family.

It catalyses the reaction 3-dehydroquinate = 3-dehydroshikimate + H2O. The catalysed reaction is shikimate + NADP(+) = 3-dehydroshikimate + NADPH + H(+). The protein operates within metabolic intermediate biosynthesis; chorismate biosynthesis; chorismate from D-erythrose 4-phosphate and phosphoenolpyruvate: step 3/7. It functions in the pathway metabolic intermediate biosynthesis; chorismate biosynthesis; chorismate from D-erythrose 4-phosphate and phosphoenolpyruvate: step 4/7. Its function is as follows. Bifunctional enzyme that catalyzes two sequential steps of the aromatic amino acids biosynthetic pathway. In the first reaction, the AroD domain catalyzes the cis-dehydration of 3-dehydroquinate (DHQ) and introduces the first double bond of the aromatic ring to yield 3-dehydroshikimate; in the second reaction, the AroE domain catalyzes the reversible NADPH linked reduction of 3-dehydroshikimate (DHSA) to yield shikimate (SA). This Chlamydia pneumoniae (Chlamydophila pneumoniae) protein is Shikimate biosynthesis protein AroDE.